Here is a 994-residue protein sequence, read N- to C-terminus: ASI1-immunoprecipitated protein 2 (994 aa).

2 disordered regions span residues 39-182 and 187-206; these read AEFS…SGEN and KADE…NDPE. Basic and acidic residues predominate over residues 45-54; that stretch reads KSDESSDENS. Residues 60-102 are compositionally biased toward polar residues; it reads SQCSFNGDNLLRSSGVNAPGSSHNTSSEASHLVNSNHDTSSEN. Basic and acidic residues-rich tracts occupy residues 119–140 and 148–163; these read LLDR…DHQA and KVKE…EKKN. The segment at 212-263 adopts a PHD-type zinc-finger fold; the sequence is VKVCDTCGDAGREDLLAICSRCSDGAEHTYCMRVMLKKVPKGYWLCEECKFA. 8 residues coordinate Zn(2+): Cys215, Cys218, Cys230, Cys233, His239, Cys242, Cys257, and Cys260. Disordered regions lie at residues 342–567 and 839–875; these read AHYS…NNKG and CSNP…TDRT. Residues 371–384 are compositionally biased toward low complexity; sequence SFLKSNSFNSLSSR. Composition is skewed to polar residues over residues 417–435 and 449–464; these read VGKS…NCND and TEAN…NSSI. 3 stretches are compositionally biased toward basic and acidic residues: residues 469 to 478, 536 to 552, and 858 to 875; these read SPRDLKDLQS, PRSR…KDAV, and DTFR…TDRT.

As to quaternary structure, component of the ASI1-AIPP1-EDM2 (AAE) RNA regulatory complex composed of at least AIPP1/EDM3, ASI1 and EDM2 and may contain CPL2, AIPP2 and AIPP3/BDT1. Part of the BAH-PHD bivalent histone reader complex that contains AIPP2, PAIPP2 and AIPP3/BDT1; the BAH-PHD module associates with CPL2 to form the BAH-PHD-CPL2 complex (BPC) for transcriptional repression. Binds directly to ASI1, AIPP3/BDT1 and CPL2 but not to PAIPP2. In terms of tissue distribution, expressed ubiquitously.

Its function is as follows. Together with AIPP3/BDT1 and PAIPP2, cooperates to form a BAH-PHD bivalent histone reader complex able to read histone H3 lysine 27 trimethylation (H3K27me3) and low-methylated H3K4 histone marks in order to regulate transcription, especially to prevent early flowering; promotes AIPP3/BDT1 binding to H3K27me3. CPL2 is subsequently recruited to form a BAH-PHD-CPL2 complex (BPC) in order to silence several H3K27me3 and low-methylated H3K4 enriched loci, including AGO5, via the phosphorylation state-dependent inhibition of Pol II release from the transcriptional start site (e.g. Ser5P-Pol II dephosphorylation). The BPC complex represses flowering by inhibiting the expression of several genes, including AGL6, FT, FUL and SOC1. Prevents the accumulation of intronic heterochromatin-containing genes (e.g. IBM1, At3g05410 and RPP7). The sequence is that of ASI1-immunoprecipitated protein 2 from Arabidopsis thaliana (Mouse-ear cress).